The primary structure comprises 243 residues: DNA repair protein RecO (243 aa).

It belongs to the RecO family.

Its function is as follows. Involved in DNA repair and RecF pathway recombination. This Geobacter sulfurreducens (strain ATCC 51573 / DSM 12127 / PCA) protein is DNA repair protein RecO.